The sequence spans 518 residues: Suppressor of hairless homolog (518 aa).

The interval 22–59 (ETDQQRSHVKERVNGTPNQNGGTSTSSKPRSVFENRPP) is disordered. Basic and acidic residues predominate over residues 24–34 (DQQRSHVKERV). Positions 36-50 (GTPNQNGGTSTSSKP) are enriched in polar residues. 3 consecutive DNA-binding regions follow at residues 89-96 (KSYGNEKR), 223-232 (RLRSQTVSTR), and 296-328 (RKVD…ERMY). In terms of domain architecture, IPT/TIG spans 386–476 (PVVHSLQLNG…YPTNLTFTFT (91 aa)).

It belongs to the Su(H) family. In terms of assembly, interacts with activated Notch proteins.

It is found in the nucleus. Transcriptional regulator that plays a central role in Notch signaling, a signaling pathway involved in cell-cell communication that regulates a broad spectrum of cell-fate determinations. Acts as a transcriptional repressor when it is not associated with Notch proteins. When associated with some Notch protein, it acts as a transcriptional activator that activates transcription of Notch target genes. The polypeptide is Suppressor of hairless homolog (RBP-JK) (Halocynthia roretzi (Sea squirt)).